The sequence spans 2545 residues: Methylphloroacetophenone synthase (2545 aa).

The interval 8-261 (AFGALAPWPA…HVAIHEGIPQ (254 aa)) is N-terminal acylcarrier protein transacylase (SAT) domain. The Ketosynthase family 3 (KS3) domain maps to 383–798 (KDAIAIIGMG…GSNAAMIVLE (416 aa)). Residues cysteine 547, histidine 682, and histidine 721 each act as for beta-ketoacyl synthase activity in the active site. The segment at 914–1218 (LCFGGQVSDR…VSLQLNKPNS (305 aa)) is malonyl-CoA:ACP transacylase (MAT) domain. Serine 1001 (for acyl/malonyl transferase activity) is an active-site residue. The segment at 1293–1423 (LPAVLIRLKS…GTVNLKVADD (131 aa)) is N-terminal hotdog fold. Residues 1293-1605 (LPAVLIRLKS…FTDIRRPVPI (313 aa)) form the PKS/mFAS DH domain. The product template (PT) domain stretch occupies residues 1296-1604 (VLIRLKSFDS…NFTDIRRPVP (309 aa)). Residues 1449–1605 (RSESLRGNVL…FTDIRRPVPI (157 aa)) are C-terminal hotdog fold. A Carrier domain is found at 1657 to 1731 (TSIYEDICGL…SLVDYLHGKG (75 aa)). Residue serine 1691 is modified to O-(pantetheine 4'-phosphoryl)serine. Low complexity predominate over residues 1748–1768 (SSSHAISTGASSPPDSSGASA). The tract at residues 1748–1773 (SSSHAISTGASSPPDSSGASAMTTPP) is disordered. Positions 1931–2163 (FGASETKLLN…GFKHVSWTDG (233 aa)) are methyltransferase (CMeT) domain. Positions 2198 to 2544 (AGVPMEEVVW…YDFICRQLGM (347 aa)) are claisen cyclase (CLC) domain. Catalysis depends on for thioesterase activity residues serine 2321, aspartate 2481, and histidine 2513.

Methylphloroacetophenone synthase; part of the gene cluster that mediates the biosynthesis of usnic acid, a dibenzofuran lichen product possessing a broad spectrum of biological activities. Two genes, mpas and mpao, comprise the usnic acid biosynthetic gene cluster with a single post-PKS enzyme, the methylphloracetophenone oxidase (mpao). The methylphloroacetophenone synthase (mpas) is a non-reducing polyketide synthase that produces methylphloracetophenone from acetate via a methylated tetraketide intermediate. The methylphloroacetophenone oxidase then carries out the oxidative dimerization of methylphloracetophenone to usnic acid. The chain is Methylphloroacetophenone synthase from Cladonia uncialis (Cup lichen).